Consider the following 2397-residue polypeptide: Cell wall alpha-1,3-glucan synthase mok11 (2397 aa).

Positions 1683–1705 are disordered; that stretch reads SNQQSFDFKSSESDSFPQKSPSV. A compositionally biased stretch (low complexity) spans 1687-1698; that stretch reads SFDFKSSESDSF.

This sequence belongs to the glycosyltransferase group 1 family.

The enzyme catalyses [(1-&gt;3)-alpha-D-glucosyl](n) + UDP-alpha-D-glucose = [(1-&gt;3)-alpha-D-glucosyl](n+1) + UDP + H(+). In Schizosaccharomyces pombe (strain 972 / ATCC 24843) (Fission yeast), this protein is Cell wall alpha-1,3-glucan synthase mok11 (mok11).